The following is a 246-amino-acid chain: tRNA (guanine-N(1)-)-methyltransferase (246 aa).

Residues G117 and 137 to 142 (IGDYVL) contribute to the S-adenosyl-L-methionine site.

The protein belongs to the RNA methyltransferase TrmD family. Homodimer.

The protein localises to the cytoplasm. It catalyses the reaction guanosine(37) in tRNA + S-adenosyl-L-methionine = N(1)-methylguanosine(37) in tRNA + S-adenosyl-L-homocysteine + H(+). Specifically methylates guanosine-37 in various tRNAs. The chain is tRNA (guanine-N(1)-)-methyltransferase from Acinetobacter baumannii (strain ACICU).